Consider the following 409-residue polypeptide: Arginine deiminase (409 aa).

C399 functions as the Amidino-cysteine intermediate in the catalytic mechanism.

The protein belongs to the arginine deiminase family.

The protein localises to the cytoplasm. The enzyme catalyses L-arginine + H2O = L-citrulline + NH4(+). The protein operates within amino-acid degradation; L-arginine degradation via ADI pathway; carbamoyl phosphate from L-arginine: step 1/2. The chain is Arginine deiminase from Streptococcus pneumoniae (strain 70585).